A 76-amino-acid polypeptide reads, in one-letter code: Transcription modulator YdgT (76 aa).

The protein belongs to the Hha/YmoA/Cnu family.

In terms of biological role, binds to H-NS and modifies the range of genes it silences; H-NS alone silences 'core' genes while the H-NS-Hha complex (and presumably also H-NS-YdgT) silences genes acquired by horizontal gene transfer. Plays a role silencing virulence factors in the absence of factors that induce pathogenicity. This chain is Transcription modulator YdgT (ydgT), found in Salmonella typhimurium (strain SL1344).